The sequence spans 162 residues: Disulfide bond formation protein B (162 aa).

Residues 1-4 (MRII) are Cytoplasmic-facing. A helical transmembrane segment spans residues 5–21 (FLLIFLACAGLIGYALY). The Periplasmic portion of the chain corresponds to 22–39 (LQLMDGLLPCPLCIFQRI). An intrachain disulfide couples Cys-31 to Cys-34. Residues 40–56 (AYWLIGITALFTFIHNP) traverse the membrane as a helical segment. Over 57-62 (QSLGQH) the chain is Cytoplasmic. The helical transmembrane segment at 63–80 (IYYGLIILFSLAGAIVAG) threads the bilayer. Residues 81-136 (RQAWLIRFPEAFECGISPEEAFLNGLPLAQWWPNMFEANGDCNDGTWQFLSLTLPD) lie on the Periplasmic side of the membrane. An intrachain disulfide couples Cys-94 to Cys-122. A helical transmembrane segment spans residues 137–155 (WSLLIFAAFGIIAGLLWHK). The Cytoplasmic segment spans residues 156-162 (KYNSINQ).

This sequence belongs to the DsbB family.

The protein localises to the cell inner membrane. Its function is as follows. Required for disulfide bond formation in some periplasmic proteins. Acts by oxidizing the DsbA protein. In Nitrosomonas eutropha (strain DSM 101675 / C91 / Nm57), this protein is Disulfide bond formation protein B.